A 476-amino-acid chain; its full sequence is 1-aminocyclopropane-1-carboxylate synthase 4 (476 aa).

Lys282 carries the post-translational modification N6-(pyridoxal phosphate)lysine.

It belongs to the class-I pyridoxal-phosphate-dependent aminotransferase family. Homodimer. It depends on pyridoxal 5'-phosphate as a cofactor.

It catalyses the reaction S-adenosyl-L-methionine = 1-aminocyclopropane-1-carboxylate + S-methyl-5'-thioadenosine + H(+). Its pathway is alkene biosynthesis; ethylene biosynthesis via S-adenosyl-L-methionine; ethylene from S-adenosyl-L-methionine: step 1/2. Functionally, catalyzes the formation of 1-aminocyclopropane-1-carboxylate, a direct precursor of ethylene in higher plants. This Solanum lycopersicum (Tomato) protein is 1-aminocyclopropane-1-carboxylate synthase 4 (ACS4).